The primary structure comprises 1305 residues: Contactin-associated protein like 5-1 (1305 aa).

The signal sequence occupies residues Met-1–Thr-24. Residues Ala-25–Cys-174 form the F5/8 type C domain. 2 Laminin G-like domains span residues Val-180–Cys-360 and Pro-367–Cys-544. The N-linked (GlcNAc...) asparagine glycan is linked to Asn-282. Cys-329 and Cys-360 form a disulfide bridge. An N-linked (GlcNAc...) asparagine glycan is attached at Asn-496. 3 disulfide bridges follow: Cys-512-Cys-544, Cys-550-Cys-561, and Cys-555-Cys-570. The EGF-like 1 domain maps to Ile-546–His-583. Asn-571 carries an N-linked (GlcNAc...) asparagine glycan. Cys-572 and Cys-582 are joined by a disulfide. The Fibrinogen C-terminal domain maps to Asp-584–Trp-790. Asn-622 is a glycosylation site (N-linked (GlcNAc...) asparagine). The 166-residue stretch at Asn-791–Cys-956 folds into the Laminin G-like 3 domain. 4 disulfide bridges follow: Cys-929-Cys-956, Cys-960-Cys-973, Cys-967-Cys-982, and Cys-984-Cys-994. The 39-residue stretch at Pro-957–Gln-995 folds into the EGF-like 2 domain. One can recognise a Laminin G-like 4 domain in the interval Glu-1014–Cys-1198. Residue Asn-1057 is glycosylated (N-linked (GlcNAc...) asparagine). Cys-1163 and Cys-1198 are joined by a disulfide. Residues Val-1238–Ile-1258 traverse the membrane as a helical segment.

This sequence belongs to the neurexin family.

It localises to the membrane. Functionally, may play a role in the correct development and proper functioning of the peripheral and central nervous system and be involved in cell adhesion and intercellular communication. This chain is Contactin-associated protein like 5-1 (Cntnap5a), found in Rattus norvegicus (Rat).